We begin with the raw amino-acid sequence, 941 residues long: Isoleucine--tRNA ligase (941 aa).

The 'HIGH' region signature appears at 59 to 69 (PYANGNIHIGH). Glu-562 is an L-isoleucyl-5'-AMP binding site. The short motif at 603–607 (KMSKS) is the 'KMSKS' region element. Lys-606 is a binding site for ATP. 4 residues coordinate Zn(2+): Cys-904, Cys-907, Cys-924, and Cys-927.

It belongs to the class-I aminoacyl-tRNA synthetase family. IleS type 1 subfamily. As to quaternary structure, monomer. Zn(2+) is required as a cofactor.

The protein localises to the cytoplasm. The enzyme catalyses tRNA(Ile) + L-isoleucine + ATP = L-isoleucyl-tRNA(Ile) + AMP + diphosphate. Catalyzes the attachment of isoleucine to tRNA(Ile). As IleRS can inadvertently accommodate and process structurally similar amino acids such as valine, to avoid such errors it has two additional distinct tRNA(Ile)-dependent editing activities. One activity is designated as 'pretransfer' editing and involves the hydrolysis of activated Val-AMP. The other activity is designated 'posttransfer' editing and involves deacylation of mischarged Val-tRNA(Ile). The protein is Isoleucine--tRNA ligase of Haemophilus influenzae (strain ATCC 51907 / DSM 11121 / KW20 / Rd).